A 294-amino-acid chain; its full sequence is tRNA dimethylallyltransferase (294 aa).

10-17 lines the ATP pocket; sequence GPTAVGKT. 12–17 is a substrate binding site; sequence TAVGKT. Residues 35 to 38 are interaction with substrate tRNA; sequence DSQQ.

It belongs to the IPP transferase family. Monomer. The cofactor is Mg(2+).

The enzyme catalyses adenosine(37) in tRNA + dimethylallyl diphosphate = N(6)-dimethylallyladenosine(37) in tRNA + diphosphate. Catalyzes the transfer of a dimethylallyl group onto the adenine at position 37 in tRNAs that read codons beginning with uridine, leading to the formation of N6-(dimethylallyl)adenosine (i(6)A). The protein is tRNA dimethylallyltransferase of Streptococcus pneumoniae (strain P1031).